Consider the following 314-residue polypeptide: Homoserine kinase (314 aa).

95–105 (PHSRGLGSSAS) lines the ATP pocket.

The protein belongs to the GHMP kinase family. Homoserine kinase subfamily.

The protein resides in the cytoplasm. The catalysed reaction is L-homoserine + ATP = O-phospho-L-homoserine + ADP + H(+). It functions in the pathway amino-acid biosynthesis; L-threonine biosynthesis; L-threonine from L-aspartate: step 4/5. Its function is as follows. Catalyzes the ATP-dependent phosphorylation of L-homoserine to L-homoserine phosphate. The polypeptide is Homoserine kinase (Rhodococcus erythropolis (strain PR4 / NBRC 100887)).